Reading from the N-terminus, the 177-residue chain is Large ribosomal subunit protein uL6 (177 aa).

Residues Y151 to K177 form a disordered region. Positions E155–K177 are enriched in basic and acidic residues.

This sequence belongs to the universal ribosomal protein uL6 family. As to quaternary structure, part of the 50S ribosomal subunit.

Functionally, this protein binds to the 23S rRNA, and is important in its secondary structure. It is located near the subunit interface in the base of the L7/L12 stalk, and near the tRNA binding site of the peptidyltransferase center. In Psychrobacter sp. (strain PRwf-1), this protein is Large ribosomal subunit protein uL6.